The primary structure comprises 426 residues: 3-phosphoshikimate 1-carboxyvinyltransferase (426 aa).

3-phosphoshikimate contacts are provided by Lys-22, Ser-23, and Arg-27. Lys-22 contributes to the phosphoenolpyruvate binding site. Phosphoenolpyruvate is bound by residues Gly-96 and Arg-124. 3-phosphoshikimate contacts are provided by Ser-170, Ser-171, Gln-172, Ser-198, Asp-314, Asn-337, and Lys-341. Residue Gln-172 participates in phosphoenolpyruvate binding. Asp-314 acts as the Proton acceptor in catalysis. Phosphoenolpyruvate contacts are provided by Arg-345, Arg-387, and Lys-412.

The protein belongs to the EPSP synthase family. Monomer.

The protein resides in the cytoplasm. The enzyme catalyses 3-phosphoshikimate + phosphoenolpyruvate = 5-O-(1-carboxyvinyl)-3-phosphoshikimate + phosphate. Its pathway is metabolic intermediate biosynthesis; chorismate biosynthesis; chorismate from D-erythrose 4-phosphate and phosphoenolpyruvate: step 6/7. Catalyzes the transfer of the enolpyruvyl moiety of phosphoenolpyruvate (PEP) to the 5-hydroxyl of shikimate-3-phosphate (S3P) to produce enolpyruvyl shikimate-3-phosphate and inorganic phosphate. This is 3-phosphoshikimate 1-carboxyvinyltransferase from Shewanella sp. (strain MR-7).